The sequence spans 259 residues: Imidazole glycerol phosphate synthase subunit HisF (259 aa).

Catalysis depends on residues Asp11 and Asp130.

It belongs to the HisA/HisF family. As to quaternary structure, heterodimer of HisH and HisF.

The protein localises to the cytoplasm. It carries out the reaction 5-[(5-phospho-1-deoxy-D-ribulos-1-ylimino)methylamino]-1-(5-phospho-beta-D-ribosyl)imidazole-4-carboxamide + L-glutamine = D-erythro-1-(imidazol-4-yl)glycerol 3-phosphate + 5-amino-1-(5-phospho-beta-D-ribosyl)imidazole-4-carboxamide + L-glutamate + H(+). It functions in the pathway amino-acid biosynthesis; L-histidine biosynthesis; L-histidine from 5-phospho-alpha-D-ribose 1-diphosphate: step 5/9. Functionally, IGPS catalyzes the conversion of PRFAR and glutamine to IGP, AICAR and glutamate. The HisF subunit catalyzes the cyclization activity that produces IGP and AICAR from PRFAR using the ammonia provided by the HisH subunit. This chain is Imidazole glycerol phosphate synthase subunit HisF, found in Polaromonas naphthalenivorans (strain CJ2).